The primary structure comprises 326 residues: UDP-N-acetylglucosamine transporter (326 aa).

8 helical membrane-spanning segments follow: residues 4 to 24 (NLKY…VLTM), 38 to 58 (LSST…ILLV), 136 to 156 (LGVY…FVQW), 174 to 194 (FVGL…GVYF), 212 to 232 (LGFF…GELV), 244 to 264 (LTWI…AVIK), 269 to 289 (ILKG…SYFW), and 293 to 313 (FVPT…TFLY).

The protein belongs to the nucleotide-sugar transporter family. SLC35A subfamily. Interacts with SLC35A2; the interaction is reduced in the presence of SLC35A4. Found in a complex with SLC35A2 and SLC35A4. Interacts with MGAT4B. Post-translationally, O-Glcnacylation regulates the stability of SLC35A3 and the specific complex formation with MGAT4B.

It localises to the golgi apparatus membrane. It carries out the reaction UMP(out) + UDP-N-acetyl-alpha-D-glucosamine(in) = UMP(in) + UDP-N-acetyl-alpha-D-glucosamine(out). Transports diphosphate-N-acetylglucosamine (UDP-GlcNAc) from the cytosol into the lumen of the Golgi apparatus, functioning as an antiporter that exchanges UDP-N-acetyl-alpha-D-glucosamine for UMP. May supply UDP-GlcNAc as substrate for Golgi-resident glycosyltransferases that generate highly branched, multiantennary complex N-glycans and keratan sulfate. However, the exact role of SLC35A3 still needs to be elucidated, it could be a member of a catalytically more efficient multiprotein complex rather than function independently as a single transporter. This is UDP-N-acetylglucosamine transporter (SLC35A3) from Bos taurus (Bovine).